Reading from the N-terminus, the 175-residue chain is Large ribosomal subunit protein uL10 (175 aa).

Belongs to the universal ribosomal protein uL10 family. As to quaternary structure, part of the ribosomal stalk of the 50S ribosomal subunit. The N-terminus interacts with L11 and the large rRNA to form the base of the stalk. The C-terminus forms an elongated spine to which L12 dimers bind in a sequential fashion forming a multimeric L10(L12)X complex.

Functionally, forms part of the ribosomal stalk, playing a central role in the interaction of the ribosome with GTP-bound translation factors. This is Large ribosomal subunit protein uL10 from Cyanothece sp. (strain PCC 7425 / ATCC 29141).